The chain runs to 617 residues: Protein fem-1 homolog C (617 aa).

ANK repeat units lie at residues 2-31 (DLKT…KDDV), 40-70 (NGAT…SVEI), 82-111 (EGAP…SVNN), 115-144 (TNST…DLEV), 148-177 (HGHT…DVNR), 181-210 (KGNT…RMEK), and 213-242 (YGMT…TSKN). 2 TPR repeats span residues 245–279 (INAL…RHSD) and 338–371 (SYYI…QQNN). 2 ANK repeats span residues 481–523 (NNFS…DVNV) and 527–556 (EQNS…HFDS).

Belongs to the fem-1 family. In terms of assembly, component of a CRL2 E3 ubiquitin-protein ligase complex, also named ECS (Elongin BC-CUL2/5-SOCS-box protein) complex.

Its pathway is protein modification; protein ubiquitination. Substrate-recognition component of a Cul2-RING (CRL2) E3 ubiquitin-protein ligase complex of the DesCEND (destruction via C-end degrons) pathway, which recognizes a C-degron located at the extreme C terminus of target proteins, leading to their ubiquitination and degradation. The C-degron recognized by the DesCEND pathway is usually a motif of less than ten residues and can be present in full-length proteins, truncated proteins or proteolytically cleaved forms. The CRL2(FEM1C) complex specifically recognizes proteins with an arginine at the C-terminus: recognizes and binds proteins ending with -Lys/Arg-Xaa-Arg and -Lys/Arg-Xaa-Xaa-Arg C-degrons, leading to their ubiquitination and degradation. The polypeptide is Protein fem-1 homolog C (Xenopus laevis (African clawed frog)).